The following is a 256-amino-acid chain: uncharacterized protein (256 aa).

6 consecutive transmembrane segments (helical) span residues 6 to 26, 29 to 49, 61 to 81, 145 to 165, 175 to 195, and 218 to 238; these read TSFI…VSFL, LALV…GTFI, ISGT…GLYF, IIGC…TGIA, YYFK…IWLI, and IGWL…AIQF.

The protein belongs to the DedA family.

It localises to the cell membrane. This is an uncharacterized protein from Buchnera aphidicola subsp. Acyrthosiphon pisum (strain APS) (Acyrthosiphon pisum symbiotic bacterium).